The following is a 423-amino-acid chain: UPF0229 protein PSPTO_0546 (423 aa).

Residues 65–110 (HHGRGGKQTVVHPGNKEFTTGEHIARPQGGAGGKGPGKAGNSGEGM) form a disordered region. Residues 93-107 (GGAGGKGPGKAGNSG) show a composition bias toward gly residues.

This sequence belongs to the UPF0229 family.

The protein is UPF0229 protein PSPTO_0546 of Pseudomonas syringae pv. tomato (strain ATCC BAA-871 / DC3000).